Consider the following 339-residue polypeptide: Phenylalanine--tRNA ligase alpha subunit (339 aa).

Glu254 is a Mg(2+) binding site.

Belongs to the class-II aminoacyl-tRNA synthetase family. Phe-tRNA synthetase alpha subunit type 1 subfamily. In terms of assembly, tetramer of two alpha and two beta subunits. Mg(2+) is required as a cofactor.

Its subcellular location is the cytoplasm. It catalyses the reaction tRNA(Phe) + L-phenylalanine + ATP = L-phenylalanyl-tRNA(Phe) + AMP + diphosphate + H(+). This Clostridium botulinum (strain Alaska E43 / Type E3) protein is Phenylalanine--tRNA ligase alpha subunit.